Reading from the N-terminus, the 437-residue chain is Kynureninase (437 aa).

Residues L99, T100, 127 to 130, S183, D212, H215, and Y237 contribute to the pyridoxal 5'-phosphate site; that span reads FPSD. K238 bears the N6-(pyridoxal phosphate)lysine mark. Positions 267 and 295 each coordinate pyridoxal 5'-phosphate.

It belongs to the kynureninase family. In terms of assembly, homodimer. It depends on pyridoxal 5'-phosphate as a cofactor.

The protein localises to the cytoplasm. The enzyme catalyses L-kynurenine + H2O = anthranilate + L-alanine + H(+). The catalysed reaction is 3-hydroxy-L-kynurenine + H2O = 3-hydroxyanthranilate + L-alanine + H(+). It participates in amino-acid degradation; L-kynurenine degradation; L-alanine and anthranilate from L-kynurenine: step 1/1. Its pathway is cofactor biosynthesis; NAD(+) biosynthesis; quinolinate from L-kynurenine: step 2/3. Functionally, catalyzes the cleavage of L-kynurenine (L-Kyn) and L-3-hydroxykynurenine (L-3OHKyn) into anthranilic acid (AA) and 3-hydroxyanthranilic acid (3-OHAA), respectively. The protein is Kynureninase of Yarrowia lipolytica (strain CLIB 122 / E 150) (Yeast).